We begin with the raw amino-acid sequence, 159 residues long: NADH-quinone oxidoreductase subunit I (159 aa).

4Fe-4S ferredoxin-type domains are found at residues 51-80 (RRYE…IEAD) and 90-119 (TRYD…EGPN). Cys60, Cys63, Cys66, Cys70, Cys99, Cys102, Cys105, and Cys109 together coordinate [4Fe-4S] cluster.

The protein belongs to the complex I 23 kDa subunit family. In terms of assembly, NDH-1 is composed of 14 different subunits. Subunits NuoA, H, J, K, L, M, N constitute the membrane sector of the complex. [4Fe-4S] cluster is required as a cofactor.

The protein localises to the cell inner membrane. It carries out the reaction a quinone + NADH + 5 H(+)(in) = a quinol + NAD(+) + 4 H(+)(out). NDH-1 shuttles electrons from NADH, via FMN and iron-sulfur (Fe-S) centers, to quinones in the respiratory chain. The immediate electron acceptor for the enzyme in this species is believed to be ubiquinone. Couples the redox reaction to proton translocation (for every two electrons transferred, four hydrogen ions are translocated across the cytoplasmic membrane), and thus conserves the redox energy in a proton gradient. The sequence is that of NADH-quinone oxidoreductase subunit I from Rickettsia peacockii (strain Rustic).